The primary structure comprises 110 residues: Large ribosomal subunit protein uL22 (110 aa).

This sequence belongs to the universal ribosomal protein uL22 family. In terms of assembly, part of the 50S ribosomal subunit.

This protein binds specifically to 23S rRNA; its binding is stimulated by other ribosomal proteins, e.g. L4, L17, and L20. It is important during the early stages of 50S assembly. It makes multiple contacts with different domains of the 23S rRNA in the assembled 50S subunit and ribosome. Functionally, the globular domain of the protein is located near the polypeptide exit tunnel on the outside of the subunit, while an extended beta-hairpin is found that lines the wall of the exit tunnel in the center of the 70S ribosome. This is Large ribosomal subunit protein uL22 from Vibrio campbellii (strain ATCC BAA-1116).